Here is a 326-residue protein sequence, read N- to C-terminus: tRNA-modifying protein YgfZ (326 aa).

Tryptophan 27 and tryptophan 189 together coordinate folate.

This sequence belongs to the tRNA-modifying YgfZ family.

The protein resides in the cytoplasm. Functionally, folate-binding protein involved in regulating the level of ATP-DnaA and in the modification of some tRNAs. It is probably a key factor in regulatory networks that act via tRNA modification, such as initiation of chromosomal replication. The polypeptide is tRNA-modifying protein YgfZ (Escherichia coli O6:H1 (strain CFT073 / ATCC 700928 / UPEC)).